The sequence spans 464 residues: MAKSILIRSLYRNTDDFLSKEITISGWIRTLRSSNAFGFIEVNDGSFFKNIQVVFDDKLNNFKEISKLPISSSISVIGILVATPEAKQPFEIQAKNIIIEGMSNSDYPLQKKRHTFEYLRTIAHLRPRSNAFAATFRVRSVAAYAIHKFFQDQNFVYTHTPIITGSDCEGAGEMFRVTTLDPKTPELSKDGSVDFSKDFFGKETNLTVSGQLNAECFALAFRNIYTFGPTFRAENSNTTRHAAEFWMIEPEIAFADLQDDMELAENMLKYVIKYVMDECPEELEFFNQFVDKGLLERLNHVVSSDFAKVTYTEAVEILQKCGKKFDYDVSWGIDLQTEHERYLTEEHFKKPLFVTDYPKDIKAFYMRLNDDGKTVAATDLLVPGIGEIIGGSQREERLDVLKDRMTELNLSEDDYWWYLELRKYGETKHAGFGLGFERLIMYITGMTNIRDVVPFPRTPGTSEF.

Belongs to the class-II aminoacyl-tRNA synthetase family. Homodimer.

Its subcellular location is the cytoplasm. The catalysed reaction is tRNA(Asn) + L-asparagine + ATP = L-asparaginyl-tRNA(Asn) + AMP + diphosphate + H(+). The polypeptide is Asparagine--tRNA ligase (Clostridium beijerinckii (strain ATCC 51743 / NCIMB 8052) (Clostridium acetobutylicum)).